Reading from the N-terminus, the 782-residue chain is Potassium transporter 6 (782 aa).

The Cytoplasmic portion of the chain corresponds to 1–18 (MEIESGSYQNAKKESWRT). A helical transmembrane segment spans residues 19 to 39 (VLTLAYQSLGVVYGDLSISPL). Residues 40–61 (YVYKSTFAEDIHHSESNEEIFG) lie on the Extracellular side of the membrane. Residues 62-82 (VLSFIFWTITLVPLLKYVFIV) form a helical membrane-spanning segment. The Cytoplasmic segment spans residues 83-153 (LRADDNGEGG…TLEKHGVLQK (71 aa)). A helical transmembrane segment spans residues 154–174 (ILLVLALIGTCMVIGDGVLTP). The Extracellular segment spans residues 175–195 (AISVFSAVSGVELSMSKEHHK). Residues 196–216 (YIELPAACVILIGLFALQHYG) form a helical membrane-spanning segment. Topologically, residues 217–219 (THR) are cytoplasmic. A helical membrane pass occupies residues 220-240 (VGFLFAPVILLWLMCISAIGV). Over 241-270 (YNIFHWNPHVYQALSPYYMYKFLKKTQSRG) the chain is Extracellular. A helical membrane pass occupies residues 271-291 (WMSLGGILLCITGSEAMFADL). The Cytoplasmic portion of the chain corresponds to 292–296 (GHFSQ). Residues 297-317 (LSIKIAFTSLVYPSLILAYMG) form a helical membrane-spanning segment. Residues 318–347 (QAAYLSQHHIIESEYNIGFYVSVPERLRWP) lie on the Extracellular side of the membrane. Residues 348 to 368 (VLVIAILAAVVGSQAIITGTF) form a helical membrane-spanning segment. Residues 369-395 (SIIKQCSALGCFPKVKIVHTSSKIHGQ) are Cytoplasmic-facing. Residues 396–416 (IYIPEINWILMVLCLAVTIGF) traverse the membrane as a helical segment. Over 417–421 (RDTKR) the chain is Extracellular. 2 helical membrane-spanning segments follow: residues 422–442 (LGNA…CLMS) and 443–463 (LVIV…VVFF). Residues 464–474 (GTIESLYFSAS) are Extracellular-facing. The chain crosses the membrane as a helical span at residues 475-495 (LIKFLEGAWVPIALAFCFLLA). The Cytoplasmic segment spans residues 496–782 (MCTWHYGTLK…TLEVGMIYNV (287 aa)). The segment covering 664-675 (YESDIDDPDKPG) has biased composition (basic and acidic residues). The disordered stretch occupies residues 664-693 (YESDIDDPDKPGTSEIRSPKPKKKSKSKVK). Residues 682–693 (PKPKKKSKSKVK) show a composition bias toward basic residues.

The protein belongs to the HAK/KUP transporter (TC 2.A.72.3) family.

The protein resides in the cell membrane. In terms of biological role, probable potassium transporter. The sequence is that of Potassium transporter 6 (POT6) from Arabidopsis thaliana (Mouse-ear cress).